The following is a 261-amino-acid chain: Indole-3-glycerol phosphate synthase (261 aa).

Belongs to the TrpC family.

The catalysed reaction is 1-(2-carboxyphenylamino)-1-deoxy-D-ribulose 5-phosphate + H(+) = (1S,2R)-1-C-(indol-3-yl)glycerol 3-phosphate + CO2 + H2O. Its pathway is amino-acid biosynthesis; L-tryptophan biosynthesis; L-tryptophan from chorismate: step 4/5. The sequence is that of Indole-3-glycerol phosphate synthase from Alkaliphilus metalliredigens (strain QYMF).